The chain runs to 210 residues: CKLF-like MARVEL transmembrane domain-containing protein 2B (210 aa).

Helical transmembrane passes span 35–55, 65–85, 103–123, and 127–147; these read FWAQ…IAAM, PIVI…FFLY, LMND…ALEA, and LPVP…ISII. The 123-residue stretch at 35–157 folds into the MARVEL domain; that stretch reads FWAQGHAECK…DLCLQRRQFK (123 aa).

The protein belongs to the chemokine-like factor family.

It localises to the membrane. The protein is CKLF-like MARVEL transmembrane domain-containing protein 2B (Cmtm2b) of Mus musculus (Mouse).